A 276-amino-acid polypeptide reads, in one-letter code: Diaminopimelate epimerase (276 aa).

Substrate-binding residues include Asn13, Gln46, and Asn66. Cys75 functions as the Proton donor in the catalytic mechanism. Residues 76–77 (GN), Asn159, Asn192, and 210–211 (ER) contribute to the substrate site. Catalysis depends on Cys219, which acts as the Proton acceptor. 220–221 (GS) is a substrate binding site.

This sequence belongs to the diaminopimelate epimerase family. As to quaternary structure, homodimer.

Its subcellular location is the cytoplasm. It catalyses the reaction (2S,6S)-2,6-diaminopimelate = meso-2,6-diaminopimelate. It participates in amino-acid biosynthesis; L-lysine biosynthesis via DAP pathway; DL-2,6-diaminopimelate from LL-2,6-diaminopimelate: step 1/1. Functionally, catalyzes the stereoinversion of LL-2,6-diaminopimelate (L,L-DAP) to meso-diaminopimelate (meso-DAP), a precursor of L-lysine and an essential component of the bacterial peptidoglycan. This is Diaminopimelate epimerase from Aliivibrio fischeri (strain ATCC 700601 / ES114) (Vibrio fischeri).